A 693-amino-acid chain; its full sequence is MA3 DOMAIN-CONTAINING TRANSLATION REGULATORY FACTOR 2 (693 aa).

The disordered stretch occupies residues S25–D60. Positions E90 to K211 constitute an MI 1 domain. Residues E241–D248 carry the Nuclear localization signal 1 motif. 3 consecutive MI domains span residues D254–A375, V389–N510, and E560–Q681. Residues V430–A437 carry the Nuclear localization signal 2 motif. The interval E673 to G693 is disordered. Positions K683–G693 are enriched in low complexity.

The protein belongs to the PDCD4 family. As to quaternary structure, binds to EIF4A1. The association with ribosomes is modulated by cellular energy status and TOR activity. In terms of tissue distribution, mostly expressed in reproductive tissues, such as flower buds and flowers, and, to a lower extent, in vegetative tissues, such as leaves, roots and stems.

It localises to the nucleus. It is found in the cytoplasm. The protein localises to the cytosol. Involved in target of rapamycin (TOR)-regulated translation control, especially under energy-deficient conditions. The protein is MA3 DOMAIN-CONTAINING TRANSLATION REGULATORY FACTOR 2 of Arabidopsis thaliana (Mouse-ear cress).